A 914-amino-acid chain; its full sequence is Serine/threonine kinase SAD-1 (914 aa).

One can recognise a Protein kinase domain in the interval 47–298; sequence YKLEKTLGKG…LADVFKHPWV (252 aa). Residues 53-61 and K76 each bind ATP; that span reads LGKGQTGLV. The active-site Proton acceptor is the D169. Disordered stretches follow at residues 375 to 551, 563 to 590, and 757 to 914; these read AQED…SPPS, TMNS…SGPW, and NSTQ…ADKV. Over residues 393–402 the composition is skewed to basic and acidic residues; the sequence is PPKKRTDSSR. Residues 444 to 462 are compositionally biased toward low complexity; that stretch reads RSSTRDLFGSSSSGSYSAR. The span at 473-482 shows a compositional bias: polar residues; that stretch reads ASRSTNSYHY. Over residues 495–526 the composition is skewed to basic and acidic residues; the sequence is AARHVRDAQERRESRDSGRGSSRKESKDRSDK. Low complexity-rich tracts occupy residues 527 to 551 and 563 to 573; these read SASS…SPPS and TMNSTNSSTNS. Residues 574-590 are compositionally biased toward polar residues; sequence LIAGNSQTSIGSTSGPW. Residues 780–796 show a composition bias toward low complexity; it reads DSSVGSACSDSESNASS. Over residues 823–837 the composition is skewed to polar residues; sequence SMRSVGSGTANSYKS. Residues 850-876 are compositionally biased toward low complexity; it reads ASSSSASNRYGPSSSSSGSYSNNADYS. Over residues 882–903 the composition is skewed to polar residues; the sequence is SQRSNGSSAPKNQYSPGSQRSF.

The protein belongs to the protein kinase superfamily. CAMK Ser/Thr protein kinase family. SNF1 subfamily. Interacts with strd-1 and nab-1. It depends on Mg(2+) as a cofactor. Expressed in neurons. Colocalizes with strd-1 along the dorsal nerve cord.

Its subcellular location is the synapse. The enzyme catalyses L-seryl-[protein] + ATP = O-phospho-L-seryl-[protein] + ADP + H(+). The catalysed reaction is L-threonyl-[protein] + ATP = O-phospho-L-threonyl-[protein] + ADP + H(+). In terms of biological role, regulates both neuronal polarity and synaptic organization when bound to strd-1. Kinase activity is required for the establishment, but not the maintenance, of both processes. Binding to nab-1 is essential for role in restricting axonal fate during neuronal polarization but is not required for regulating synapse morphology. This chain is Serine/threonine kinase SAD-1, found in Caenorhabditis elegans.